A 341-amino-acid polypeptide reads, in one-letter code: HTH-type transcriptional repressor PurR (341 aa).

Residues alanine 2 to valine 56 form the HTH lacI-type domain. Residues isoleucine 4–asparagine 23 constitute a DNA-binding region (H-T-H motif). A DNA-binding region spans residues serine 48–valine 56. Residues tyrosine 73, arginine 190, threonine 192, phenylalanine 221, and aspartate 275 each contribute to the hypoxanthine site.

As to quaternary structure, homodimer.

The protein operates within purine metabolism; purine nucleotide biosynthesis [regulation]. Functionally, is the main repressor of the genes involved in the de novo synthesis of purine nucleotides, regulating purB, purC, purEK, purF, purHD, purL, purMN and guaBA expression. PurR is allosterically activated to bind its cognate DNA by binding the purine corepressors, hypoxanthine or guanine, thereby effecting transcription repression. The protein is HTH-type transcriptional repressor PurR of Escherichia coli O139:H28 (strain E24377A / ETEC).